Here is a 506-residue protein sequence, read N- to C-terminus: Protein MGF 505-9R (506 aa).

3 ANK repeats span residues 54-83 (SIHK…NLKY), 253-283 (QVDT…EIVE), and 313-343 (FVKK…KINL).

The protein belongs to the asfivirus MGF 505 family.

Functionally, plays a role in virus cell tropism, and may be required for efficient virus replication in macrophages. This is Protein MGF 505-9R from African swine fever virus (isolate Tick/Malawi/Lil 20-1/1983) (ASFV).